A 132-amino-acid chain; its full sequence is MSMTDNVADMLTRIRNAYKSKLINVSFPSSKIKNSILDVLQKEGYIKDYVITQKNNISYTKVALKYSINGEASICEIRRVSKPGKRVYSAIKDLKGYYNNMGIYILSTPYGVMSDREAHIKNVGGEVICKVF.

This sequence belongs to the universal ribosomal protein uS8 family. As to quaternary structure, part of the 30S ribosomal subunit. Contacts proteins S5 and S12.

Its function is as follows. One of the primary rRNA binding proteins, it binds directly to 16S rRNA central domain where it helps coordinate assembly of the platform of the 30S subunit. This Rickettsia typhi (strain ATCC VR-144 / Wilmington) protein is Small ribosomal subunit protein uS8.